The chain runs to 474 residues: Nuclear hormone receptor family member nhr-91 (474 aa).

Residues Ser-50–Thr-69 are disordered. A compositionally biased stretch (polar residues) spans Met-51–Thr-69. The nuclear receptor DNA-binding region spans Ser-97–Glu-172. 2 NR C4-type zinc fingers span residues Cys-100–Cys-120 and Cys-136–Cys-155. The NR LBD domain maps to Ser-215–Glu-474.

The protein belongs to the nuclear hormone receptor family.

The protein resides in the nucleus. Orphan nuclear receptor. This is Nuclear hormone receptor family member nhr-91 (nhr-91) from Caenorhabditis elegans.